We begin with the raw amino-acid sequence, 216 residues long: Orotate phosphoribosyltransferase (216 aa).

Residue K30 coordinates 5-phospho-alpha-D-ribose 1-diphosphate. 38–39 contacts orotate; it reads FF. 5-phospho-alpha-D-ribose 1-diphosphate is bound by residues 75 to 76, R102, K103, K106, H108, and 128 to 136; these read YK and DDVITAGTA. The orotate site is built by T132 and R160.

This sequence belongs to the purine/pyrimidine phosphoribosyltransferase family. PyrE subfamily. Homodimer. It depends on Mg(2+) as a cofactor.

It carries out the reaction orotidine 5'-phosphate + diphosphate = orotate + 5-phospho-alpha-D-ribose 1-diphosphate. The protein operates within pyrimidine metabolism; UMP biosynthesis via de novo pathway; UMP from orotate: step 1/2. Functionally, catalyzes the transfer of a ribosyl phosphate group from 5-phosphoribose 1-diphosphate to orotate, leading to the formation of orotidine monophosphate (OMP). This Acinetobacter baumannii (strain ACICU) protein is Orotate phosphoribosyltransferase.